A 578-amino-acid chain; its full sequence is Octopamine receptor 2 (578 aa).

Topologically, residues 1–84 (MMSFPIALFA…YDSITIFITV (84 aa)) are extracellular. N-linked (GlcNAc...) asparagine glycans are attached at residues Asn13, Asn38, Asn46, and Asn59. The chain crosses the membrane as a helical span at residues 85–107 (AVVLTLITLWTILGNFFVLMALY). At 108 to 117 (RYGTLRTMSN) the chain is on the cytoplasmic side. Residues 118–139 (CLIGNLAISDLLLAVTVLPIST) form a helical membrane-spanning segment. Residues 140 to 156 (VHDLLGYWVFGEFTCTL) are Extracellular-facing. Cys154 and Cys239 are joined by a disulfide. The chain crosses the membrane as a helical span at residues 157–177 (WLCMDVLYCTASIWGLCTVAF). The Cytoplasmic portion of the chain corresponds to 178-197 (DRYLATVYPVWYHDQRSVRK). The helical transmembrane segment at 198–220 (AVGCIVFVWIFSIVISFAPFIGW) threads the bilayer. Residues 221 to 251 (QHMIPSFFSFNASIQRYQCILFTSSSYVLYS) lie on the Extracellular side of the membrane. Asn231 is a glycosylation site (N-linked (GlcNAc...) asparagine). Residues 252-272 (SMGSFVIPAILMAFMYVRIFV) form a helical membrane-spanning segment. Topologically, residues 273–495 (VLHNQSRGVK…ELREQRATKR (223 aa)) are cytoplasmic. A helical membrane pass occupies residues 496–517 (MLLIMACFCVCWMPFLFMYILR). Topologically, residues 518–531 (SVCDTCHMNQHFVA) are extracellular. Residues 532–553 (AIIWLGYVNSSLNPVLYTLFND) traverse the membrane as a helical segment. The Cytoplasmic segment spans residues 554 to 578 (DFKVAFKRLIGARSPSAYRSPGPRR).

The protein belongs to the G-protein coupled receptor 1 family.

The protein resides in the cell membrane. In terms of biological role, receptor for octopamine. Octopamine (OA) is a neurotransmitter, neurohormone, and neuromodulator in invertebrates. This receptor induces a long lasting opening of voltage- independent chloride channels, a process which seems to involve protein phosphorylation but does not require either cAPK or PKC. The rank order of potency for agonists is p-synephrine &gt; p-octopamine &gt; xylometazoline &gt; B-HT920 &gt; norepinephrine = clonidine &gt; epinephrine &gt; p-tyramine &gt; phenylephrine = oxymetazoline = mehoxamine = dopamine &gt; serotonin &gt; histamine. For antagonists, the rank order is rauwolscine = mianserin &gt; phentolamine &gt; chlorpromazine &gt; spiperone &gt; yohimbine &gt; propanolol &gt; alprenolol &gt; prazosine &gt; pindolol. This Lymnaea stagnalis (Great pond snail) protein is Octopamine receptor 2.